We begin with the raw amino-acid sequence, 75 residues long: Brevinin-2SN2 (75 aa).

A signal peptide spans 1-22 (MFTMKKSLLFLFFLGTISLSFC). Positions 23-40 (EEERGADEDDGGEMTEEE) are cleaved as a propeptide — removed in mature form. Cysteines 69 and 75 form a disulfide.

The protein belongs to the frog skin active peptide (FSAP) family. Brevinin subfamily. In terms of tissue distribution, expressed by the skin glands.

Its subcellular location is the secreted. Antimicrobial peptide. Active against some Gram-negative and a variety of Gram-positive bacterial strains. Active against fungus C.glabrata 090902 but not against C.albicans ATCC 10231. Shows hemolytic activity against human erythrocytes. The polypeptide is Brevinin-2SN2 (Sylvirana spinulosa (Fine-spined frog)).